Consider the following 400-residue polypeptide: Formate-dependent phosphoribosylglycinamide formyltransferase (400 aa).

N(1)-(5-phospho-beta-D-ribosyl)glycinamide-binding positions include 22–23 and glutamate 82; that span reads EL. Residues arginine 115, lysine 157, 162–167, 197–200, and glutamate 205 each bind ATP; these read SSGKGQ and EGFI. The ATP-grasp domain occupies 120–315; that stretch reads RLAAETLGVP…EFELHARAIL (196 aa). Mg(2+)-binding residues include glutamate 274 and glutamate 286. N(1)-(5-phospho-beta-D-ribosyl)glycinamide contacts are provided by residues aspartate 293, lysine 362, and 369 to 370; that span reads RR.

Belongs to the PurK/PurT family. As to quaternary structure, homodimer.

It catalyses the reaction N(1)-(5-phospho-beta-D-ribosyl)glycinamide + formate + ATP = N(2)-formyl-N(1)-(5-phospho-beta-D-ribosyl)glycinamide + ADP + phosphate + H(+). The protein operates within purine metabolism; IMP biosynthesis via de novo pathway; N(2)-formyl-N(1)-(5-phospho-D-ribosyl)glycinamide from N(1)-(5-phospho-D-ribosyl)glycinamide (formate route): step 1/1. Its function is as follows. Involved in the de novo purine biosynthesis. Catalyzes the transfer of formate to 5-phospho-ribosyl-glycinamide (GAR), producing 5-phospho-ribosyl-N-formylglycinamide (FGAR). Formate is provided by PurU via hydrolysis of 10-formyl-tetrahydrofolate. The chain is Formate-dependent phosphoribosylglycinamide formyltransferase from Variovorax paradoxus (strain S110).